The sequence spans 284 residues: MTAQNIDGKAIARAIRTTLSDKVKARKEAGQRIPGLAVILVGLDPASQVYVGSKRKACEEVGFLSQSFDLPDTTSEDDLLALIDRCNEDPAIDGILVQLPLPAHIDSSKVIERIRPDKDVDGFHPYNVGRLAQRIPVLRSCTPMGIMTLIRSTGVDTYGLDAVVVGASNIVGRPMTLELLLAGCTTTTCHRFTKNLEDKVRQADLLVVAVGKPHFIPGDWIKPGAIVIDVGINRLDDGRLVGDVEFDVAAERAAFITPVPGGVGPMTIASLLENTLYAAENYHD.

NADP(+)-binding positions include 166–168 and isoleucine 232; that span reads GAS.

Belongs to the tetrahydrofolate dehydrogenase/cyclohydrolase family. As to quaternary structure, homodimer.

It catalyses the reaction (6R)-5,10-methylene-5,6,7,8-tetrahydrofolate + NADP(+) = (6R)-5,10-methenyltetrahydrofolate + NADPH. The catalysed reaction is (6R)-5,10-methenyltetrahydrofolate + H2O = (6R)-10-formyltetrahydrofolate + H(+). Its pathway is one-carbon metabolism; tetrahydrofolate interconversion. Functionally, catalyzes the oxidation of 5,10-methylenetetrahydrofolate to 5,10-methenyltetrahydrofolate and then the hydrolysis of 5,10-methenyltetrahydrofolate to 10-formyltetrahydrofolate. This is Bifunctional protein FolD from Shewanella amazonensis (strain ATCC BAA-1098 / SB2B).